Reading from the N-terminus, the 450-residue chain is tRNA-2-methylthio-N(6)-dimethylallyladenosine synthase (450 aa).

The MTTase N-terminal domain maps to 8–124 (RTLHITTWGC…LPELIAEIEA (117 aa)). The [4Fe-4S] cluster site is built by cysteine 17, cysteine 52, cysteine 87, cysteine 162, cysteine 166, and cysteine 169. The Radical SAM core domain occupies 148–380 (ASQGPIAFLA…QAVLRDQQHA (233 aa)). Residues 383–445 (RAQVGRSFEV…PNSLMASLTQ (63 aa)) enclose the TRAM domain.

Belongs to the methylthiotransferase family. MiaB subfamily. In terms of assembly, monomer. Requires [4Fe-4S] cluster as cofactor.

Its subcellular location is the cytoplasm. The enzyme catalyses N(6)-dimethylallyladenosine(37) in tRNA + (sulfur carrier)-SH + AH2 + 2 S-adenosyl-L-methionine = 2-methylsulfanyl-N(6)-dimethylallyladenosine(37) in tRNA + (sulfur carrier)-H + 5'-deoxyadenosine + L-methionine + A + S-adenosyl-L-homocysteine + 2 H(+). Catalyzes the methylthiolation of N6-(dimethylallyl)adenosine (i(6)A), leading to the formation of 2-methylthio-N6-(dimethylallyl)adenosine (ms(2)i(6)A) at position 37 in tRNAs that read codons beginning with uridine. This Acidiphilium cryptum (strain JF-5) protein is tRNA-2-methylthio-N(6)-dimethylallyladenosine synthase.